Reading from the N-terminus, the 425-residue chain is Glutamate-1-semialdehyde 2,1-aminomutase (425 aa).

Lys265 is modified (N6-(pyridoxal phosphate)lysine).

It belongs to the class-III pyridoxal-phosphate-dependent aminotransferase family. HemL subfamily. Homodimer. Pyridoxal 5'-phosphate is required as a cofactor.

The protein resides in the cytoplasm. The catalysed reaction is (S)-4-amino-5-oxopentanoate = 5-aminolevulinate. It participates in porphyrin-containing compound metabolism; protoporphyrin-IX biosynthesis; 5-aminolevulinate from L-glutamyl-tRNA(Glu): step 2/2. In Opitutus terrae (strain DSM 11246 / JCM 15787 / PB90-1), this protein is Glutamate-1-semialdehyde 2,1-aminomutase.